Consider the following 334-residue polypeptide: N-acetyl-gamma-glutamyl-phosphate reductase (334 aa).

C154 is an active-site residue.

Belongs to the NAGSA dehydrogenase family. Type 1 subfamily.

Its subcellular location is the cytoplasm. It catalyses the reaction N-acetyl-L-glutamate 5-semialdehyde + phosphate + NADP(+) = N-acetyl-L-glutamyl 5-phosphate + NADPH + H(+). It participates in amino-acid biosynthesis; L-arginine biosynthesis; N(2)-acetyl-L-ornithine from L-glutamate: step 3/4. Catalyzes the NADPH-dependent reduction of N-acetyl-5-glutamyl phosphate to yield N-acetyl-L-glutamate 5-semialdehyde. The polypeptide is N-acetyl-gamma-glutamyl-phosphate reductase (Escherichia coli (strain K12)).